The chain runs to 325 residues: Malate dehydrogenase (325 aa).

Residue 7-13 (GSTGRVG) participates in NADP(+) binding. Substrate contacts are provided by R84 and R90. Residues N97 and 120–122 (VTN) contribute to the NADP(+) site. Substrate is bound by residues N122 and R153. The active-site Proton acceptor is H177.

This sequence belongs to the LDH/MDH superfamily.

It catalyses the reaction (S)-malate + NADP(+) = oxaloacetate + NADPH + H(+). The enzyme catalyses (S)-malate + NAD(+) = oxaloacetate + NADH + H(+). Its function is as follows. Catalyzes the reversible oxidation of malate to oxaloacetate. Can use NAD(+) and NADP(+) with similar specific activity. In Methanothermobacter marburgensis (strain ATCC BAA-927 / DSM 2133 / JCM 14651 / NBRC 100331 / OCM 82 / Marburg) (Methanobacterium thermoautotrophicum), this protein is Malate dehydrogenase.